We begin with the raw amino-acid sequence, 61 residues long: Large ribosomal subunit protein eL29 (61 aa).

A compositionally biased stretch (basic residues) spans 1–26 (MAKSKNHTNHNQNKKAHRNGIKRPQK). The disordered stretch occupies residues 1 to 32 (MAKSKNHTNHNQNKKAHRNGIKRPQKHRYDSL).

Belongs to the eukaryotic ribosomal protein eL29 family. Component of the large ribosomal subunit (LSU). Mature yeast ribosomes consist of a small (40S) and a large (60S) subunit. The 40S small subunit contains 1 molecule of ribosomal RNA (18S rRNA) and at least 33 different proteins. The large 60S subunit contains 3 rRNA molecules (25S, 5.8S and 5S rRNA) and at least 46 different proteins.

The protein resides in the cytoplasm. It is found in the nucleus. Its subcellular location is the nucleolus. Functionally, component of the ribosome, a large ribonucleoprotein complex responsible for the synthesis of proteins in the cell. The small ribosomal subunit (SSU) binds messenger RNAs (mRNAs) and translates the encoded message by selecting cognate aminoacyl-transfer RNA (tRNA) molecules. The large subunit (LSU) contains the ribosomal catalytic site termed the peptidyl transferase center (PTC), which catalyzes the formation of peptide bonds, thereby polymerizing the amino acids delivered by tRNAs into a polypeptide chain. The nascent polypeptides leave the ribosome through a tunnel in the LSU and interact with protein factors that function in enzymatic processing, targeting, and the membrane insertion of nascent chains at the exit of the ribosomal tunnel. This is Large ribosomal subunit protein eL29 (rpl29) from Schizosaccharomyces pombe (strain 972 / ATCC 24843) (Fission yeast).